A 621-amino-acid chain; its full sequence is 5-aminolevulinate synthase, mitochondrial (621 aa).

The disordered stretch occupies residues 76–95; the sequence is DAKGSLAGRPVHHKAATEST. Substrate is bound by residues arginine 122 and serine 234. The pyridoxal 5'-phosphate site is built by serine 286, histidine 314, and threonine 359. Residue lysine 362 is part of the active site. Lysine 362 bears the N6-(pyridoxal phosphate)lysine mark. Threonine 391 and threonine 392 together coordinate pyridoxal 5'-phosphate. Threonine 477 contacts substrate.

This sequence belongs to the class-II pyridoxal-phosphate-dependent aminotransferase family. Homodimer. The cofactor is pyridoxal 5'-phosphate.

Its subcellular location is the mitochondrion matrix. The catalysed reaction is succinyl-CoA + glycine + H(+) = 5-aminolevulinate + CO2 + CoA. The protein operates within porphyrin-containing compound metabolism; protoporphyrin-IX biosynthesis; 5-aminolevulinate from glycine: step 1/1. Its function is as follows. Catalyzes the synthesis of 5-aminolevulinate (ALA) from succinyl-CoA and glycine, the first and rate-limiting step in heme biosynthesis. This is 5-aminolevulinate synthase, mitochondrial (hem1) from Agaricus bisporus (White button mushroom).